A 167-amino-acid polypeptide reads, in one-letter code: UPF0114 protein Tola_1474 (167 aa).

4 helical membrane-spanning segments follow: residues 15 to 35 (IMAPIYLGLSLALLALGIKFF), 53 to 73 (LILIILSLIDISLVGGLIVMV), 109 to 129 (VAASIVAISSIHLLKVFMNTE), and 136 to 156 (IKWYLLIHITFVMSAFAMGYL).

This sequence belongs to the UPF0114 family.

It localises to the cell membrane. In Tolumonas auensis (strain DSM 9187 / NBRC 110442 / TA 4), this protein is UPF0114 protein Tola_1474.